The sequence spans 348 residues: Phosphoribosylformylglycinamidine cyclo-ligase (348 aa).

The protein belongs to the AIR synthase family.

Its subcellular location is the cytoplasm. The enzyme catalyses 2-formamido-N(1)-(5-O-phospho-beta-D-ribosyl)acetamidine + ATP = 5-amino-1-(5-phospho-beta-D-ribosyl)imidazole + ADP + phosphate + H(+). It functions in the pathway purine metabolism; IMP biosynthesis via de novo pathway; 5-amino-1-(5-phospho-D-ribosyl)imidazole from N(2)-formyl-N(1)-(5-phospho-D-ribosyl)glycinamide: step 2/2. The polypeptide is Phosphoribosylformylglycinamidine cyclo-ligase (Roseobacter denitrificans (strain ATCC 33942 / OCh 114) (Erythrobacter sp. (strain OCh 114))).